Consider the following 371-residue polypeptide: Peptide chain release factor 2 (371 aa).

N5-methylglutamine is present on Gln253.

Belongs to the prokaryotic/mitochondrial release factor family. Methylated by PrmC. Methylation increases the termination efficiency of RF2.

It localises to the cytoplasm. Peptide chain release factor 2 directs the termination of translation in response to the peptide chain termination codons UGA and UAA. This chain is Peptide chain release factor 2, found in Mycobacterium ulcerans (strain Agy99).